Here is a 331-residue protein sequence, read N- to C-terminus: Protein RecA (331 aa).

An ATP-binding site is contributed by 66–73 (GPESSGKT).

Belongs to the RecA family.

It localises to the cytoplasm. Can catalyze the hydrolysis of ATP in the presence of single-stranded DNA, the ATP-dependent uptake of single-stranded DNA by duplex DNA, and the ATP-dependent hybridization of homologous single-stranded DNAs. It interacts with LexA causing its activation and leading to its autocatalytic cleavage. The polypeptide is Protein RecA (Lactobacillus delbrueckii subsp. bulgaricus (strain ATCC 11842 / DSM 20081 / BCRC 10696 / JCM 1002 / NBRC 13953 / NCIMB 11778 / NCTC 12712 / WDCM 00102 / Lb 14)).